We begin with the raw amino-acid sequence, 386 residues long: MRFFLSPPHMGGNELKYIEEVFKSNYIAPLGEFVNRFEQSVKAYSKSENALALNSATAALHLALRVAGVKQDDIVLASSFTFIASVAPICYLKAKPVFIDCDETYNIDVDLLKLAIKECEKKPKALILTHLYGNAAKMDEIVEICKENEIVLIEDAAEALGSFYKNKALGTFGEFGAYSYNGNKIITTSGGGMLIGKNKEKIEKARFYSTQARENCLHYEHLDYGYNYRLSNVLGAIGVAQMEVLEQRVLKKREIYEWYKEFLGECFSFLDELENSRSNRWLSTALIDFDKNELNSCQKDINISQKNITLHPKISKLIEDLKNEQIETRPLWKAMHAQEVFKGAKAYLNGNSELFFQKGICLPSGTAMSKDDVYEISKLILKSIKA.

Residues 25 to 28 (NYIA), A56, and S179 each bind substrate. K184 is subject to N6-(pyridoxal phosphate)lysine. Residues N227 and 325 to 328 (QIET) each bind substrate.

It belongs to the DegT/DnrJ/EryC1 family. Pyridoxal 5'-phosphate serves as cofactor.

It carries out the reaction UDP-N-acetylbacillosamine + 2-oxoglutarate = UDP-2-acetamido-2,6-dideoxy-alpha-D-xylo-hex-4-ulose + L-glutamate. It functions in the pathway protein modification; protein glycosylation. Its function is as follows. Aminotransferase involved in the bacillosamine biosynthesis pathway by producing UDP-4-amino-4,6-dideoxy-alpha-D-GlcNAc (UDP-2-acetamido-4-amino-2,4,6-trideoxy-alpha-D-glucopyranose), a precursor used in the production of the glycan component 2,4-diacetamido-2,4,6-trideoxy-alpha-D-glucopyranose. Required for host colonization and virulence. Involved in the N-linked protein glycosylation pathway. In Campylobacter jejuni subsp. jejuni serotype O:2 (strain ATCC 700819 / NCTC 11168), this protein is UDP-N-acetylbacillosamine transaminase (pglE).